The following is a 213-amino-acid chain: Kynurenine formamidase (213 aa).

W18 contacts substrate. The Zn(2+) site is built by H48, H52, and D54. Residue H58 is the Proton donor/acceptor of the active site. Residues H160 and E172 each coordinate Zn(2+).

It belongs to the Cyclase 1 superfamily. KynB family. In terms of assembly, homodimer. The cofactor is Zn(2+).

The enzyme catalyses N-formyl-L-kynurenine + H2O = L-kynurenine + formate + H(+). Its pathway is amino-acid degradation; L-tryptophan degradation via kynurenine pathway; L-kynurenine from L-tryptophan: step 2/2. Catalyzes the hydrolysis of N-formyl-L-kynurenine to L-kynurenine, the second step in the kynurenine pathway of tryptophan degradation. The chain is Kynurenine formamidase from Burkholderia cenocepacia (strain ATCC BAA-245 / DSM 16553 / LMG 16656 / NCTC 13227 / J2315 / CF5610) (Burkholderia cepacia (strain J2315)).